The chain runs to 1703 residues: MMSSEEYEADCFGLYSDENNVLLKANEPETTAATKQQHQPQFQQQQQQQQQQQQHHHQHQQPPPSSNGHTSPIPSQVNGDGSAANCGESGKTNTNTGSHSHSNSGNTNTDADKEQEREKAKEKANEEESEDSDDDVVVVLEGCEGNASSSSSSSNSNSNASSNNHKAAATTTTTATTANHCNRSGGSSRSHRSARSSRQISQSTAVGKTTTCAAKKPTAAQATTTTAKNSNSNSNVNVNVNVNSNGSGNGNANSKVNRRSRQRSLSKDINNQPASSNSNSNSSNNSSNSNGGATATAAGFMSSAAAAAAGAAGGGALFQPQSVSTANSSSSNNNNSSTPAALATHSPTSNSPVSGASSASSLLTAAFGNLFGGSSAKMLNELFGRQMKQAQDATSGLPQSLDNAMLAAAMETATSAELLIGSLNSTSKLLQQQHNNNSIAPANSTPMSNGTNASISPGSAHSSSHSHQGVSPKGSRRVSACSDRSLEAAAADVAGGSPPRAASVSSLNGGASSGEQHQSQLQHDLVAHHMLRNILQGKKELMQLDQELRTAMQQQQQQLQEKEQLHSKLNNNNNNNIAATANNNNNTTMESINLIDDSEMADIKIKSEPQTAPQPQQSPHGSSHSSRSGSGSGSHSSMASDGSLRRKSSDSLDSHGAQDDAQDEEDAAPTGQRSESRAPEEPQLPTKKESVDDMLDEVELLGLHSRGSDMDSLASPSHSDMMLLDKDDVLDEDDDDDCVEQKTSGSGCLKKPGMDLKRARVENIVSGMRCSPSSGLAQAGQLQVNGCKKRKLYQPQQHAMERYVAAAAGLNFGLNLQSMMLDQEDSESNELESPQIQQKRVEKNALKSQLRSMQEQLAEMQQKYVQLCSRMEQESECQELDQDQDVEQEQEPDNGSSDHIELSPSPTLTGDGDVSPNHKEETGQERPGSSSPSPSPLKPKTSLGESSDSGANMLSQMMSKMMSGKLHNPLVGVGHPALPQGFPPLLQHMGDMSHAAAMYQQFFFEQEARMAKEAAEQQQQQQQQQQQQQQQQQQEQQRRFEQEQQEQQRRKEEQQQQIQRQQQHLQQLQQQQMEQQHVATAAPRPQMHHPAPARLPTRMGGAAGHTALKSELSEKFQMLRANNNSSMMRMSGTDLEGLADVLKSEITTSLSALVDTIVTRFVHQRRLFSKQADSVTAAAEQLNKDLLLASQILDRKSPRTKVADRPQNGPTPATQSAAAMFQAPKTPQGMNPVAAAALYNSMTGPFCLPPDQQQQQQTAQQQQSAQQQQQSSQQTQQQLEQNEALSLVVTPKKKRHKVTDTRITPRTVSRILAQDGVVPPTGGPPSTPQQQQQQQQQQQQQQQQQQQQASNGGNSNATPAQSPTRSSGGAAYHPQPPPPPPPMMPVSLPTSVAIPNPSLHESKVFSPYSPFFNPHAAAGQATAAQLHQHHQQHHPHHQSMQLSSSPPGSLGALMDSRDSPPLPHPPSMLHPALLAAAHHGGSPDYKTCLRAVMDAQDRQSECNSADMQFDGMAPTISFYKQMQLKTEHQESLMAKHCESLTPLHSSTLTPMHLRKAKLMFFWVRYPSSAVLKMYFPDIKFNKNNTAQLVKWFSNFREFYYIQMEKYARQAVTEGIKTPDDLLIAGDSELYRVLNLHYNRNNHIEVPQNFRFVVESTLREFFRAIQGGKDTEQSWKKSIYKIISRMDDPVPEYFKSPNFLEQLE.

11 disordered regions span residues 23–292 (LKAN…SNGG), 322–357 (SVSTANSSSSNNNNSSTPAALATHSPTSNSPVSGAS), 437–521 (NSIA…QSQL), 608–692 (EPQT…ESVD), 732–751 (EDDDDDCVEQKTSGSGCLKK), 823–844 (QEDSESNELESPQIQQKRVEKN), 875–951 (SECQ…DSGA), 1040–1101 (FEQE…RMGG), 1197–1217 (SPRTKVADRPQNGPTPATQSA), 1245–1389 (PFCL…VSLP), and 1418–1469 (AGQA…PSML). The segment covering 36–53 (QQHQPQFQQQQQQQQQQQ) has biased composition (low complexity). Residues 66-79 (SNGHTSPIPSQVNG) are compositionally biased toward polar residues. Residues 92–109 (TNTNTGSHSHSNSGNTNT) show a composition bias toward low complexity. Basic and acidic residues predominate over residues 110-126 (DADKEQEREKAKEKANE). The segment covering 127–136 (EESEDSDDDV) has biased composition (acidic residues). 5 stretches are compositionally biased toward low complexity: residues 137 to 188 (VVVL…GGSS), 196 to 255 (SSRQ…ANSK), 274 to 292 (ASSNSNSNSSNNSSNSNGG), 327 to 337 (NSSSSNNNNSS), and 346 to 357 (SPTSNSPVSGAS). Residues 437-452 (NSIAPANSTPMSNGTN) are compositionally biased toward polar residues. The span at 453-472 (ASISPGSAHSSSHSHQGVSP) shows a compositional bias: low complexity. 4 positions are modified to phosphoserine: Ser-479, Ser-482, Ser-485, and Ser-497. Polar residues-rich tracts occupy residues 503–521 (SVSSLNGGASSGEQHQSQL) and 608–617 (EPQTAPQPQQ). The segment covering 618–642 (SPHGSSHSSRSGSGSGSHSSMASDG) has biased composition (low complexity). Basic and acidic residues-rich tracts occupy residues 643–658 (SLRRKSSDSLDSHGAQ) and 674–691 (SESRAPEEPQLPTKKESV). Residues Ser-651 and Ser-654 each carry the phosphoserine modification. Residues 875–892 (SECQELDQDQDVEQEQEP) are compositionally biased toward acidic residues. Over residues 927-944 (PGSSSPSPSPLKPKTSLG) the composition is skewed to low complexity. Positions 1040–1054 (FEQEQQEQQRRKEEQ) are enriched in basic and acidic residues. The span at 1055 to 1076 (QQQIQRQQQHLQQLQQQQMEQQ) shows a compositional bias: low complexity. Positions 1208–1217 (NGPTPATQSA) are enriched in polar residues. Low complexity predominate over residues 1252-1278 (QQQQQQTAQQQQSAQQQQQSSQQTQQQ). Residues 1291-1298 (PKKKRHKV) carry the Nuclear localization signal motif. Over residues 1328 to 1348 (PQQQQQQQQQQQQQQQQQQQQ) the composition is skewed to low complexity. Over residues 1349-1367 (ASNGGNSNATPAQSPTRSS) the composition is skewed to polar residues. Pro residues predominate over residues 1374 to 1384 (PQPPPPPPPMM). The segment covering 1427 to 1437 (HQHHQQHHPHH) has biased composition (basic residues). Over residues 1438–1451 (QSMQLSSSPPGSLG) the composition is skewed to low complexity. The Prospero-type homeo domain maps to 1545-1603 (SSTLTPMHLRKAKLMFFWVRYPSSAVLKMYFPDIKFNKNNTAQLVKWFSNFREFYYIQM). A homeo-Prospero region spans residues 1545–1703 (SSTLTPMHLR…KSPNFLEQLE (159 aa)). The Prospero domain maps to 1604–1703 (EKYARQAVTE…KSPNFLEQLE (100 aa)).

Belongs to the Prospero homeodomain family.

It is found in the nucleus. Its subcellular location is the cytoplasm. The protein resides in the cell cortex. In terms of biological role, homeodomain protein that controls neuronal identity. As a transcriptional factor, regulates the expression of ftz, eve and en in a subset of neuroblast progeny and modulates the transcriptional activity of other homeodomain proteins such as Dfd. Required for proper neuronal differentiation, axonal outgrowth and pathfinding of most or all neurons and their precursors in central and peripheral nervous systems. Regulates asymmetric stem cell self-renewal together with brat. The protein is Homeobox protein prospero (pros) of Drosophila melanogaster (Fruit fly).